A 1126-amino-acid polypeptide reads, in one-letter code: [F-actin]-monooxygenase mical2 (1126 aa).

The interval 2–494 is monooxygenase domain; sequence GENGDDKHGR…KHLFITNELQ (493 aa). Residues Cys-97, 116–118, 123–125, Phe-183, Tyr-299, and Asp-399 each bind FAD; these read EKR and RNN. The region spanning 516–619 is the Calponin-homology (CH) domain; it reads DVRPNKLLIW…MVLYLSKFYE (104 aa). A Nuclear localization signal motif is present at residues 659–680; the sequence is RKRVPKDEKTSDDSDLNKRRKT. Disordered stretches follow at residues 748 to 830 and 892 to 935; these read AVTA…SLSS and PSLG…SGMS. The segment covering 792–803 has biased composition (pro residues); sequence VRPPVQPRPGPA. Over residues 805–824 the composition is skewed to basic and acidic residues; that stretch reads PTRELRVVERAQSHPDDLGR. The segment covering 918–932 has biased composition (low complexity); sequence SSSDSSPSSAPSRKS. In terms of domain architecture, LIM zinc-binding spans 1001–1063; that stretch reads DTCYFCKRRV…QPHFMHSVTK (63 aa). Positions 1003, 1006, 1024, 1027, 1030, 1033, 1053, and 1056 each coordinate Zn(2+).

Belongs to the Mical family. FAD is required as a cofactor.

It localises to the nucleus. The protein localises to the cytoplasm. It catalyses the reaction L-methionyl-[F-actin] + NADPH + O2 + H(+) = L-methionyl-(R)-S-oxide-[F-actin] + NADP(+) + H2O. In terms of biological role, nuclear monooxygenase that promotes depolymerization of F-actin by mediating oxidation of specific methionine residues on actin and regulates the srf signaling. Acts by modifying nuclear actin subunits through the addition of oxygen to form methionine-sulfoxide, leading to promote actin filament severing and prevent repolymerization. Acts as a key regulator of the srf signaling pathway elicited by nerve growth factor and serum: mediates oxidation and subsequent depolymerization of nuclear actin, leading to increase mkl1/mrtf-a presence in the nucleus and promote srf:mkl1/mrtf-a-dependent gene transcription. The polypeptide is [F-actin]-monooxygenase mical2 (Xenopus tropicalis (Western clawed frog)).